The sequence spans 238 residues: Ribosomal RNA small subunit methyltransferase G (238 aa).

S-adenosyl-L-methionine contacts are provided by residues Gly77, Phe82, 128-129 (AE), and Arg147.

Belongs to the methyltransferase superfamily. RNA methyltransferase RsmG family.

The protein localises to the cytoplasm. Its function is as follows. Specifically methylates the N7 position of guanine in position 535 of 16S rRNA. The polypeptide is Ribosomal RNA small subunit methyltransferase G (Listeria monocytogenes serotype 4b (strain CLIP80459)).